A 623-amino-acid polypeptide reads, in one-letter code: Kelch-like protein diablo (623 aa).

The disordered stretch occupies residues 1 to 54 (MGDLPGSGSTAQPRDAAVTGTGGNSTAGGGSSVGSTAVDRPPSPARLSHTSEKH). T19 carries the phosphothreonine modification. The span at 20–32 (GTGGNSTAGGGSS) shows a compositional bias: gly residues. Residues 72–139 (CDVVLNVGGR…CYTAHIIVEE (68 aa)) form the BTB domain. Residues 174-276 (CLGIRAFADT…SPKFLVGTVG (103 aa)) enclose the BACK domain. Kelch repeat units follow at residues 323 to 369 (VLFA…VLND), 371 to 417 (LYAV…VLDG), 418 to 464 (FLYA…VLGG), 466 to 511 (LYAI…VFNN), 513 to 558 (IYAV…VVNG), and 559 to 605 (QLYA…VMRA).

It participates in protein modification; protein ubiquitination. In terms of biological role, probable substrate-specific adapter of an E3 ubiquitin-protein ligase complex which mediates the ubiquitination and subsequent proteasomal degradation of target proteins. May have a role in synapse differentiation and growth. The polypeptide is Kelch-like protein diablo (Drosophila melanogaster (Fruit fly)).